The following is a 242-amino-acid chain: 2-C-methyl-D-erythritol 4-phosphate cytidylyltransferase (242 aa).

The protein belongs to the IspD/TarI cytidylyltransferase family. IspD subfamily.

It carries out the reaction 2-C-methyl-D-erythritol 4-phosphate + CTP + H(+) = 4-CDP-2-C-methyl-D-erythritol + diphosphate. It functions in the pathway isoprenoid biosynthesis; isopentenyl diphosphate biosynthesis via DXP pathway; isopentenyl diphosphate from 1-deoxy-D-xylulose 5-phosphate: step 2/6. Functionally, catalyzes the formation of 4-diphosphocytidyl-2-C-methyl-D-erythritol from CTP and 2-C-methyl-D-erythritol 4-phosphate (MEP). This Vesicomyosocius okutanii subsp. Calyptogena okutanii (strain HA) protein is 2-C-methyl-D-erythritol 4-phosphate cytidylyltransferase.